Here is a 238-residue protein sequence, read N- to C-terminus: Ribonuclease PH (238 aa).

Residues Arg-86 and 124–126 contribute to the phosphate site; that span reads GTR.

Belongs to the RNase PH family. In terms of assembly, homohexameric ring arranged as a trimer of dimers.

It catalyses the reaction tRNA(n+1) + phosphate = tRNA(n) + a ribonucleoside 5'-diphosphate. Its function is as follows. Phosphorolytic 3'-5' exoribonuclease that plays an important role in tRNA 3'-end maturation. Removes nucleotide residues following the 3'-CCA terminus of tRNAs; can also add nucleotides to the ends of RNA molecules by using nucleoside diphosphates as substrates, but this may not be physiologically important. Probably plays a role in initiation of 16S rRNA degradation (leading to ribosome degradation) during starvation. The protein is Ribonuclease PH of Haemophilus influenzae (strain 86-028NP).